The sequence spans 352 residues: PDZ and LIM domain protein 2 (352 aa).

The region spanning 1–84 (MALTVDVAGP…PLRLQLDRSQ (84 aa)) is the PDZ domain. 2 disordered regions span residues 67-97 (SKIRQSPSPLRLQLDRSQATSPGQTNGDSSL) and 111-149 (YTESQSSLRSSYSSPTSLSPRAGSPFSPPPSSSSLTGEA). Residues 81–95 (DRSQATSPGQTNGDS) show a composition bias toward polar residues. The span at 111–135 (YTESQSSLRSSYSSPTSLSPRAGSP) shows a compositional bias: low complexity. The residue at position 124 (serine 124) is a Phosphoserine. Threonine 126 carries the post-translational modification Phosphothreonine. Serine 127, serine 129, serine 134, serine 137, serine 143, serine 161, serine 197, serine 203, serine 213, and serine 266 each carry phosphoserine. The tract at residues 170–213 (LSYSGRPGSRQAGLGRAGDSAVLVLPPSPGPRSSRPSMDSEGGS) is disordered. The LIM zinc-binding domain occupies 284 to 344 (HTCEKCSTSI…EKHARQRYSA (61 aa)).

As to quaternary structure, interacts with alpha-actinins ACTN1 and ACTN4, FLNA and MYH9. Interacts (via LIM zinc-binding domain) with MKRN2.

The protein resides in the cytoplasm. It is found in the nucleus. The protein localises to the cytoskeleton. In terms of biological role, probable adapter protein located at the actin cytoskeleton that promotes cell attachment. Necessary for the migratory capacity of epithelial cells. Overexpression enhances cell adhesion to collagen and fibronectin and suppresses anchorage independent growth. May contribute to tumor cell migratory capacity. The chain is PDZ and LIM domain protein 2 (PDLIM2) from Homo sapiens (Human).